The sequence spans 464 residues: 26S proteasome regulatory subunit 7 homolog B (464 aa).

Residue 246–253 (GPPGSGKT) coordinates ATP. Residue lysine 452 forms a Glycyl lysine isopeptide (Lys-Gly) (interchain with G-Cter in ubiquitin) linkage.

It belongs to the AAA ATPase family. In terms of assembly, component of the 19S regulatory particle (RP/PA700) base subcomplex of the 26S proteasome. The 26S proteasome is composed of a core protease (CP), known as the 20S proteasome, capped at one or both ends by the 19S regulatory particle (RP/PA700). The RP/PA700 complex is composed of at least 17 different subunits in two subcomplexes, the base and the lid, which form the portions proximal and distal to the 20S proteolytic core, respectively.

Its subcellular location is the cytoplasm. It is found in the nucleus. In terms of biological role, the 26S proteasome is involved in the ATP-dependent degradation of ubiquitinated proteins. The regulatory (or ATPase) complex confers ATP dependency and substrate specificity to the 26S complex. This Arabidopsis thaliana (Mouse-ear cress) protein is 26S proteasome regulatory subunit 7 homolog B (RPT1B).